A 199-amino-acid chain; its full sequence is Recombination protein RecR (199 aa).

The C4-type zinc finger occupies 58 to 73 (CVRCGNITNADLCGIC). Residues 81–176 (GELCVVEDVA…QVTSLAQGVP (96 aa)) enclose the Toprim domain.

It belongs to the RecR family.

Functionally, may play a role in DNA repair. It seems to be involved in an RecBC-independent recombinational process of DNA repair. It may act with RecF and RecO. The protein is Recombination protein RecR of Cereibacter sphaeroides (strain ATCC 17029 / ATH 2.4.9) (Rhodobacter sphaeroides).